Consider the following 120-residue polypeptide: FK506-binding protein 1B (120 aa).

Residues 1–26 (MGLEKQTLRMGNGKDHPQPGDPVELN) form a disordered region. The PPIase FKBP-type domain occupies 20–115 (GDPVELNYTG…VFEVELLKIK (96 aa)).

The protein belongs to the FKBP-type PPIase family. FKBP1 subfamily.

It carries out the reaction [protein]-peptidylproline (omega=180) = [protein]-peptidylproline (omega=0). Inhibited by both FK506 and rapamycin. Its function is as follows. PPIases accelerate the folding of proteins. It catalyzes the cis-trans isomerization of proline imidic peptide bonds in oligopeptides. This is FK506-binding protein 1B (fpr1B) from Aspergillus fumigatus (strain ATCC MYA-4609 / CBS 101355 / FGSC A1100 / Af293) (Neosartorya fumigata).